Here is a 304-residue protein sequence, read N- to C-terminus: Oxygen-dependent coproporphyrinogen-III oxidase (304 aa).

S94 is a binding site for substrate. 2 residues coordinate a divalent metal cation: H98 and H108. Catalysis depends on H108, which acts as the Proton donor. 110–112 (NVR) contacts substrate. Residues H147 and H177 each contribute to the a divalent metal cation site. The tract at residues 242–277 (YVEFNLVYDRGTLFGLQTGGRTESILMSMPPLVRWE) is important for dimerization. Position 260-262 (260-262 (GGR)) interacts with substrate.

It belongs to the aerobic coproporphyrinogen-III oxidase family. As to quaternary structure, homodimer. A divalent metal cation serves as cofactor.

The protein resides in the cytoplasm. It catalyses the reaction coproporphyrinogen III + O2 + 2 H(+) = protoporphyrinogen IX + 2 CO2 + 2 H2O. Its pathway is porphyrin-containing compound metabolism; protoporphyrin-IX biosynthesis; protoporphyrinogen-IX from coproporphyrinogen-III (O2 route): step 1/1. Its function is as follows. Involved in the heme biosynthesis. Catalyzes the aerobic oxidative decarboxylation of propionate groups of rings A and B of coproporphyrinogen-III to yield the vinyl groups in protoporphyrinogen-IX. The polypeptide is Oxygen-dependent coproporphyrinogen-III oxidase (Shewanella pealeana (strain ATCC 700345 / ANG-SQ1)).